Consider the following 76-residue polypeptide: Acyl carrier protein (76 aa).

The Carrier domain occupies 1–76 (MATFDEVKEV…AAVDYIGSKQ (76 aa)). O-(pantetheine 4'-phosphoryl)serine is present on Ser36.

It belongs to the acyl carrier protein (ACP) family. Post-translationally, 4'-phosphopantetheine is transferred from CoA to a specific serine of apo-ACP by AcpS. This modification is essential for activity because fatty acids are bound in thioester linkage to the sulfhydryl of the prosthetic group.

Its subcellular location is the cytoplasm. The protein operates within lipid metabolism; fatty acid biosynthesis. Functionally, carrier of the growing fatty acid chain in fatty acid biosynthesis. This Deinococcus geothermalis (strain DSM 11300 / CIP 105573 / AG-3a) protein is Acyl carrier protein.